The primary structure comprises 77 residues: TSC22 domain family protein 3 (77 aa).

Position 1 is an N-acetylmethionine (methionine 1). A leucine-zipper region spans residues 19 to 40 (LKEQIRELVEKNSQLERENTLL). The tract at residues 41–77 (KTLASPEQLEKFQSRLSPEEPAPETPEAPEAPGGSAV) is disordered. At serine 45 the chain carries Phosphoserine. Low complexity predominate over residues 68–77 (APEAPGGSAV).

The protein belongs to the TSC-22/Dip/Bun family. In terms of assembly, can form homodimers, however it is likely to function as a monomer. Interacts with AP1 and NFKB1. Interacts with MYOD1. Interacts with HDAC1; this interaction affects HDAC1 activity on MYOG promoter and thus inhibits MYOD1 transcriptional activity.

It is found in the cytoplasm. The protein localises to the nucleus. Functionally, protects T-cells from IL2 deprivation-induced apoptosis through the inhibition of FOXO3A transcriptional activity that leads to the down-regulation of the pro-apoptotic factor BCL2L11. In macrophages, plays a role in the anti-inflammatory and immunosuppressive effects of glucocorticoids and IL10. In T-cells, inhibits anti-CD3-induced NFKB1 nuclear translocation. In vitro, suppresses AP1 and NFKB1 DNA-binding activities. Inhibits myogenic differentiation and mediates anti-myogenic effects of glucocorticoids by binding and regulating MYOD1 and HDAC1 transcriptional activity resulting in reduced expression of MYOG. This Sus scrofa (Pig) protein is TSC22 domain family protein 3 (TSC22D3).